We begin with the raw amino-acid sequence, 495 residues long: Trimethylamine methyltransferase MttB2 (495 aa).

Pyl-334 is a non-standard amino acid (pyrrolysine).

The protein belongs to the trimethylamine methyltransferase family. Can form a complex with MttC.

The catalysed reaction is Co(I)-[trimethylamine-specific corrinoid protein] + trimethylamine + H(+) = methyl-Co(III)-[trimethylamine-specific corrinoid protein] + dimethylamine. Its pathway is one-carbon metabolism; methanogenesis from trimethylamine. Its function is as follows. Catalyzes the transfer of a methyl group from trimethylamine to the corrinoid cofactor of MttC. This Methanosarcina mazei (strain ATCC BAA-159 / DSM 3647 / Goe1 / Go1 / JCM 11833 / OCM 88) (Methanosarcina frisia) protein is Trimethylamine methyltransferase MttB2 (mttB2).